Consider the following 428-residue polypeptide: Serine--tRNA ligase (428 aa).

231-233 (TAE) contacts L-serine. ATP contacts are provided by residues 262 to 264 (RRE) and Val-278. Residue Glu-285 coordinates L-serine. An ATP-binding site is contributed by 349-352 (EVSS). L-serine is bound at residue Ser-384.

This sequence belongs to the class-II aminoacyl-tRNA synthetase family. Type-1 seryl-tRNA synthetase subfamily. Homodimer. The tRNA molecule binds across the dimer.

It localises to the cytoplasm. It catalyses the reaction tRNA(Ser) + L-serine + ATP = L-seryl-tRNA(Ser) + AMP + diphosphate + H(+). It carries out the reaction tRNA(Sec) + L-serine + ATP = L-seryl-tRNA(Sec) + AMP + diphosphate + H(+). The protein operates within aminoacyl-tRNA biosynthesis; selenocysteinyl-tRNA(Sec) biosynthesis; L-seryl-tRNA(Sec) from L-serine and tRNA(Sec): step 1/1. Its function is as follows. Catalyzes the attachment of serine to tRNA(Ser). Is also able to aminoacylate tRNA(Sec) with serine, to form the misacylated tRNA L-seryl-tRNA(Sec), which will be further converted into selenocysteinyl-tRNA(Sec). The sequence is that of Serine--tRNA ligase from Chlamydia trachomatis serovar L2 (strain ATCC VR-902B / DSM 19102 / 434/Bu).